Here is a 295-residue protein sequence, read N- to C-terminus: Golgi-associated RAB2 interactor protein 1A (295 aa).

A disordered region spans residues 187–206 (MPNSSTETTPESSRPASSQS). Low complexity predominate over residues 190–206 (SSTETTPESSRPASSQS). S220, S221, S251, and S255 each carry phosphoserine.

This sequence belongs to the GARIN family. As to quaternary structure, interacts (via N-terminus) with RAB2B (in GTP-bound form).

Its subcellular location is the golgi apparatus. In terms of biological role, RAB2B effector protein required for accurate acrosome formation and normal male fertility. The polypeptide is Golgi-associated RAB2 interactor protein 1A (Garin1a) (Rattus norvegicus (Rat)).